The primary structure comprises 430 residues: Gamma-glutamyl phosphate reductase (430 aa).

Belongs to the gamma-glutamyl phosphate reductase family.

The protein resides in the cytoplasm. It carries out the reaction L-glutamate 5-semialdehyde + phosphate + NADP(+) = L-glutamyl 5-phosphate + NADPH + H(+). The protein operates within amino-acid biosynthesis; L-proline biosynthesis; L-glutamate 5-semialdehyde from L-glutamate: step 2/2. In terms of biological role, catalyzes the NADPH-dependent reduction of L-glutamate 5-phosphate into L-glutamate 5-semialdehyde and phosphate. The product spontaneously undergoes cyclization to form 1-pyrroline-5-carboxylate. The chain is Gamma-glutamyl phosphate reductase from Rhodopseudomonas palustris (strain HaA2).